Reading from the N-terminus, the 319-residue chain is Methionyl-tRNA formyltransferase (319 aa).

110–113 serves as a coordination point for (6S)-5,6,7,8-tetrahydrofolate; the sequence is SLLP.

It belongs to the Fmt family.

The enzyme catalyses L-methionyl-tRNA(fMet) + (6R)-10-formyltetrahydrofolate = N-formyl-L-methionyl-tRNA(fMet) + (6S)-5,6,7,8-tetrahydrofolate + H(+). In terms of biological role, attaches a formyl group to the free amino group of methionyl-tRNA(fMet). The formyl group appears to play a dual role in the initiator identity of N-formylmethionyl-tRNA by promoting its recognition by IF2 and preventing the misappropriation of this tRNA by the elongation apparatus. This Geobacillus thermodenitrificans (strain NG80-2) protein is Methionyl-tRNA formyltransferase.